The following is a 37-amino-acid chain: Large ribosomal subunit protein bL36 (37 aa).

It belongs to the bacterial ribosomal protein bL36 family.

This is Large ribosomal subunit protein bL36 from Trichodesmium erythraeum (strain IMS101).